A 406-amino-acid polypeptide reads, in one-letter code: MSGCPFLGNNFGYTFKKLPVEGSEEDKSQTGVNRASKGGLIYGNYLHLEKVLNAQELQSETKGNKIHDEHLFIITHQAYELWFKQILWELDSVREIFQNGHVRDERNMLKVVSRMHRVSVILKLLVQQFSILETMTALDFNDFREYLSPASGFQSLQFRLLENKIGVLQNMRVPYNRRHYRDNFKGEENELLLKSEQEKTLLELVEAWLERTPGLEPHGFNFWGKLEKNITRGLEEEFIRIQAKEESEEKEEQVAEFQKQKEVLLSLFDEKRHEHLLSKGERRLSYRALQGALMIYFYREEPRFQVPFQLLTSLMDIDSLMTKWRYNHVCMVHRMLGSKAGTGGSSGYHYLRSTVSDRYKVFVDLFNLSTYLIPRHWIPKMNPTIHKFLYTAEYCDSSYFSSDESD.

Substrate-binding positions include 72–76 and Arg-144; that span reads FIITH. His-328 lines the heme pocket. Substrate is bound at residue Thr-342.

It belongs to the tryptophan 2,3-dioxygenase family. Homotetramer. Dimer of dimers. Heme is required as a cofactor.

The enzyme catalyses L-tryptophan + O2 = N-formyl-L-kynurenine. It functions in the pathway amino-acid degradation; L-tryptophan degradation via kynurenine pathway; L-kynurenine from L-tryptophan: step 1/2. Heme-dependent dioxygenase that catalyzes the oxidative cleavage of the L-tryptophan (L-Trp) pyrrole ring and converts L-tryptophan to N-formyl-L-kynurenine. Catalyzes the oxidative cleavage of the indole moiety. The sequence is that of Tryptophan 2,3-dioxygenase from Homo sapiens (Human).